The following is a 424-amino-acid chain: 5-methylthioadenosine/S-adenosylhomocysteine deaminase (424 aa).

Residues histidine 60 and histidine 62 each coordinate Zn(2+). Substrate contacts are provided by glutamate 89 and histidine 181. Histidine 208 lines the Zn(2+) pocket. Residues glutamate 211 and aspartate 296 each contribute to the substrate site. Zn(2+) is bound at residue aspartate 296.

This sequence belongs to the metallo-dependent hydrolases superfamily. MTA/SAH deaminase family. Requires Zn(2+) as cofactor.

The enzyme catalyses S-adenosyl-L-homocysteine + H2O + H(+) = S-inosyl-L-homocysteine + NH4(+). It catalyses the reaction S-methyl-5'-thioadenosine + H2O + H(+) = S-methyl-5'-thioinosine + NH4(+). Functionally, catalyzes the deamination of 5-methylthioadenosine and S-adenosyl-L-homocysteine into 5-methylthioinosine and S-inosyl-L-homocysteine, respectively. Is also able to deaminate adenosine. The polypeptide is 5-methylthioadenosine/S-adenosylhomocysteine deaminase (Thermococcus sibiricus (strain DSM 12597 / MM 739)).